An 86-amino-acid chain; its full sequence is Small ribosomal subunit protein uS15c (86 aa).

It belongs to the universal ribosomal protein uS15 family. In terms of assembly, part of the 30S ribosomal subunit.

It localises to the plastid. This is Small ribosomal subunit protein uS15c (rps15) from Cuscuta obtusiflora (Peruvian dodder).